We begin with the raw amino-acid sequence, 287 residues long: Putative S-adenosyl-L-methionine-dependent methyltransferase SACE_1742 (287 aa).

Residues D119 and 148 to 149 (DL) contribute to the S-adenosyl-L-methionine site.

Belongs to the UPF0677 family.

Exhibits S-adenosyl-L-methionine-dependent methyltransferase activity. This Saccharopolyspora erythraea (strain ATCC 11635 / DSM 40517 / JCM 4748 / NBRC 13426 / NCIMB 8594 / NRRL 2338) protein is Putative S-adenosyl-L-methionine-dependent methyltransferase SACE_1742.